Consider the following 232-residue polypeptide: Ubiquinone biosynthesis O-methyltransferase (232 aa).

S-adenosyl-L-methionine is bound by residues R36, G55, D76, and M120.

This sequence belongs to the methyltransferase superfamily. UbiG/COQ3 family.

The catalysed reaction is a 3-demethylubiquinol + S-adenosyl-L-methionine = a ubiquinol + S-adenosyl-L-homocysteine + H(+). It catalyses the reaction a 3-(all-trans-polyprenyl)benzene-1,2-diol + S-adenosyl-L-methionine = a 2-methoxy-6-(all-trans-polyprenyl)phenol + S-adenosyl-L-homocysteine + H(+). It participates in cofactor biosynthesis; ubiquinone biosynthesis. In terms of biological role, O-methyltransferase that catalyzes the 2 O-methylation steps in the ubiquinone biosynthetic pathway. The sequence is that of Ubiquinone biosynthesis O-methyltransferase from Burkholderia cenocepacia (strain ATCC BAA-245 / DSM 16553 / LMG 16656 / NCTC 13227 / J2315 / CF5610) (Burkholderia cepacia (strain J2315)).